A 119-amino-acid polypeptide reads, in one-letter code: Large ribosomal subunit protein bL20 (119 aa).

This sequence belongs to the bacterial ribosomal protein bL20 family.

Binds directly to 23S ribosomal RNA and is necessary for the in vitro assembly process of the 50S ribosomal subunit. It is not involved in the protein synthesizing functions of that subunit. The polypeptide is Large ribosomal subunit protein bL20 (Chloroflexus aurantiacus (strain ATCC 29366 / DSM 635 / J-10-fl)).